A 523-amino-acid polypeptide reads, in one-letter code: ATP synthase subunit beta, mitochondrial (523 aa).

Residues Met1–Gln19 constitute a mitochondrion transit peptide. Gly201–Thr208 lines the ATP pocket.

This sequence belongs to the ATPase alpha/beta chains family. F-type ATPases have 2 components, CF(1) - the catalytic core - and CF(0) - the membrane proton channel. CF(1) has five subunits: alpha(3), beta(3), gamma(1), delta(1), epsilon(1). CF(0) has three main subunits: a, b and c.

It localises to the mitochondrion. The protein resides in the mitochondrion inner membrane. The enzyme catalyses ATP + H2O + 4 H(+)(in) = ADP + phosphate + 5 H(+)(out). Its function is as follows. Mitochondrial membrane ATP synthase (F(1)F(0) ATP synthase or Complex V) produces ATP from ADP in the presence of a proton gradient across the membrane which is generated by electron transport complexes of the respiratory chain. F-type ATPases consist of two structural domains, F(1) - containing the extramembraneous catalytic core, and F(0) - containing the membrane proton channel, linked together by a central stalk and a peripheral stalk. During catalysis, ATP synthesis in the catalytic domain of F(1) is coupled via a rotary mechanism of the central stalk subunits to proton translocation. Subunits alpha and beta form the catalytic core in F(1). Rotation of the central stalk against the surrounding alpha(3)beta(3) subunits leads to hydrolysis of ATP in three separate catalytic sites on the beta subunits. The polypeptide is ATP synthase subunit beta, mitochondrial (Hemicentrotus pulcherrimus (Sea urchin)).